A 213-amino-acid polypeptide reads, in one-letter code: NADH dehydrogenase [ubiquinone] iron-sulfur protein 7, mitochondrial (213 aa).

Residues 1 to 38 (MAALSAPGLCGFRILGLRSSVGTAVQARGVHQSVATDG) constitute a mitochondrion transit peptide. The disordered stretch occupies residues 32 to 53 (QSVATDGPSSTQPALPKARAVA). Residues 33–44 (SVATDGPSSTQP) show a composition bias toward polar residues. Cys-88 and Cys-89 together coordinate [4Fe-4S] cluster. Arg-111 is subject to Hydroxyarginine. Residues Cys-153 and Cys-183 each contribute to the [4Fe-4S] cluster site.

Belongs to the complex I 20 kDa subunit family. As to quaternary structure, core subunit of respiratory chain NADH dehydrogenase (Complex I) which is composed of 45 different subunits. This is a component of the iron-sulfur (IP) fragment of the enzyme. [4Fe-4S] cluster serves as cofactor. In terms of processing, hydroxylated ar Arg-111 by NDUFAF5 early in the pathway of assembly of complex I, before the formation of the juncture between peripheral and membrane arms.

It is found in the mitochondrion inner membrane. The enzyme catalyses a ubiquinone + NADH + 5 H(+)(in) = a ubiquinol + NAD(+) + 4 H(+)(out). In terms of biological role, core subunit of the mitochondrial membrane respiratory chain NADH dehydrogenase (Complex I) which catalyzes electron transfer from NADH through the respiratory chain, using ubiquinone as an electron acceptor. Essential for the catalytic activity of complex I. The sequence is that of NADH dehydrogenase [ubiquinone] iron-sulfur protein 7, mitochondrial (NDUFS7) from Gorilla gorilla gorilla (Western lowland gorilla).